Here is a 182-residue protein sequence, read N- to C-terminus: MTNQQGRLRTRVAVFACVAAAALIVDQLTKAWAMAALSNGQTIRVIPGLLSFTLVRNPGASLGMGSGATWVISLLAVVACVALAVAGVRTVSMKWSVAISFAFAGALGNLIDRVMYADGFLDGKVVDFLNYGWSVGNVADIYLVVAGVVLVILILMGEPFSHKDLIEQSDESLQSEPEADAK.

The next 3 helical transmembrane spans lie at 12-32 (VAVFACVAAAALIVDQLTKAW), 68-88 (ATWVISLLAVVACVALAVAGV), and 91-111 (VSMKWSVAISFAFAGALGNLI). Residues Asp-127 and Asp-140 contribute to the active site. Residues 135-155 (VGNVADIYLVVAGVVLVILIL) traverse the membrane as a helical segment.

Belongs to the peptidase A8 family.

It localises to the cell membrane. The enzyme catalyses Release of signal peptides from bacterial membrane prolipoproteins. Hydrolyzes -Xaa-Yaa-Zaa-|-(S,diacylglyceryl)Cys-, in which Xaa is hydrophobic (preferably Leu), and Yaa (Ala or Ser) and Zaa (Gly or Ala) have small, neutral side chains.. The protein operates within protein modification; lipoprotein biosynthesis (signal peptide cleavage). In terms of biological role, this protein specifically catalyzes the removal of signal peptides from prolipoproteins. The protein is Lipoprotein signal peptidase of Bifidobacterium longum (strain DJO10A).